Here is a 449-residue protein sequence, read N- to C-terminus: Phosphoglucosamine mutase (449 aa).

The Phosphoserine intermediate role is filled by Ser-101. Positions 101, 240, 242, and 244 each coordinate Mg(2+). Ser-101 is modified (phosphoserine).

This sequence belongs to the phosphohexose mutase family. Mg(2+) serves as cofactor. Activated by phosphorylation.

The enzyme catalyses alpha-D-glucosamine 1-phosphate = D-glucosamine 6-phosphate. Catalyzes the conversion of glucosamine-6-phosphate to glucosamine-1-phosphate. This Streptococcus mutans serotype c (strain ATCC 700610 / UA159) protein is Phosphoglucosamine mutase.